We begin with the raw amino-acid sequence, 552 residues long: Glutamine--tRNA ligase (552 aa).

The 'HIGH' region signature appears at 34-44 (PEPNGYLHIGH). ATP-binding positions include 35–37 (EPN) and 41–47 (HIGHAKS). L-glutamine is bound by residues Asp-67 and Tyr-212. ATP contacts are provided by residues Thr-231, 261–262 (RL), and 269–271 (MSK). A 'KMSKS' region motif is present at residues 268-272 (LMSKR).

Belongs to the class-I aminoacyl-tRNA synthetase family. In terms of assembly, monomer.

It is found in the cytoplasm. It carries out the reaction tRNA(Gln) + L-glutamine + ATP = L-glutaminyl-tRNA(Gln) + AMP + diphosphate. The polypeptide is Glutamine--tRNA ligase (Hamiltonella defensa subsp. Acyrthosiphon pisum (strain 5AT)).